The sequence spans 364 residues: MAHAWGPQRLAGGQPQANFEESTQGSIFTYTNSNSTRDPFEGPNYHIAPRWVYHLTSAWMVFVVIASVFTNGLVLAATMRFKKLRHPLNWILVNLAIADLAETIIASTISVVNQMYGYFVLGHPLCVVEGYTVSLCGITGLWSLAIISWERWMVVCKPFGNVRFDAKLAITGIAFSWIWAAVWTAPPIFGWSRYWPHGLKTSCGPDVFSGSSYPGVQSYMIVLMITCCFIPLSVIILCYLQVWLAIRAVAKQQKESESTQKAEKEVTRMVMVMIFAYCLCWGPYTFFACFAAAHPGYAFHPLVAALPAYFAKSATIYNPIIYVFMNRQFRNCILQLFGKKVDDSSELSSVSKTEASSVSSVSPA.

Residues 1-52 (MAHAWGPQRLAGGQPQANFEESTQGSIFTYTNSNSTRDPFEGPNYHIAPRWV) lie on the Extracellular side of the membrane. A glycan (O-linked (GlcNAc) serine) is linked at serine 22. Asparagine 34 is a glycosylation site (N-linked (GlcNAc...) asparagine). The helical transmembrane segment at 53-77 (YHLTSAWMVFVVIASVFTNGLVLAA) threads the bilayer. Residues 78–89 (TMRFKKLRHPLN) are Cytoplasmic-facing. The chain crosses the membrane as a helical span at residues 90 to 115 (WILVNLAIADLAETIIASTISVVNQM). Over 116–129 (YGYFVLGHPLCVVE) the chain is Extracellular. Cysteine 126 and cysteine 203 are oxidised to a cystine. The chain crosses the membrane as a helical span at residues 130-149 (GYTVSLCGITGLWSLAIISW). Residues 150–168 (ERWMVVCKPFGNVRFDAKL) lie on the Cytoplasmic side of the membrane. A helical transmembrane segment spans residues 169–192 (AITGIAFSWIWAAVWTAPPIFGWS). At 193–218 (RYWPHGLKTSCGPDVFSGSSYPGVQS) the chain is on the extracellular side. A helical transmembrane segment spans residues 219-246 (YMIVLMITCCFIPLSVIILCYLQVWLAI). At 247 to 268 (RAVAKQQKESESTQKAEKEVTR) the chain is on the cytoplasmic side. Residues 269–292 (MVMVMIFAYCLCWGPYTFFACFAA) form a helical membrane-spanning segment. Topologically, residues 293–300 (AHPGYAFH) are extracellular. A helical transmembrane segment spans residues 301 to 325 (PLVAALPAYFAKSATIYNPIIYVFM). At lysine 312 the chain carries N6-(retinylidene)lysine. Residues 326–364 (NRQFRNCILQLFGKKVDDSSELSSVSKTEASSVSSVSPA) lie on the Cytoplasmic side of the membrane.

The protein belongs to the G-protein coupled receptor 1 family. Opsin subfamily. Phosphorylated on some or all of the serine and threonine residues present in the C-terminal region. In terms of tissue distribution, expressed in retina (at protein level). Expressed in cone and/or rod photoreceptor cells (at protein level).

It localises to the membrane. Its function is as follows. Visual pigments are the light-absorbing molecules that mediate vision. They consist of an apoprotein, opsin, covalently linked to cis-retinal. The polypeptide is Long-wave-sensitive opsin 1 (OPN1LW) (Bos taurus (Bovine)).